We begin with the raw amino-acid sequence, 1396 residues long: DNA-directed RNA polymerase subunit beta' (1396 aa).

Zn(2+) is bound by residues cysteine 70, cysteine 72, cysteine 85, and cysteine 88. 3 residues coordinate Mg(2+): aspartate 460, aspartate 462, and aspartate 464. 4 residues coordinate Zn(2+): cysteine 814, cysteine 888, cysteine 895, and cysteine 898.

Belongs to the RNA polymerase beta' chain family. The RNAP catalytic core consists of 2 alpha, 1 beta, 1 beta' and 1 omega subunit. When a sigma factor is associated with the core the holoenzyme is formed, which can initiate transcription. Mg(2+) serves as cofactor. It depends on Zn(2+) as a cofactor.

The catalysed reaction is RNA(n) + a ribonucleoside 5'-triphosphate = RNA(n+1) + diphosphate. Its function is as follows. DNA-dependent RNA polymerase catalyzes the transcription of DNA into RNA using the four ribonucleoside triphosphates as substrates. This Chromobacterium violaceum (strain ATCC 12472 / DSM 30191 / JCM 1249 / CCUG 213 / NBRC 12614 / NCIMB 9131 / NCTC 9757 / MK) protein is DNA-directed RNA polymerase subunit beta'.